Here is an 88-residue protein sequence, read N- to C-terminus: Sm-like protein LSM5 (88 aa).

Residue Ala2 is modified to N-acetylalanine. The Sm domain maps to 9–84 (LPSELIDRCI…IAILVPGGSP (76 aa)).

The protein belongs to the snRNP Sm proteins family. Component of the heptameric LSM1-LSM7 complex that forms a seven-membered ring structure with a donut shape. The LSM subunits are arranged in the order LSM1, LSM2, LSM3, LSM6, LSM5, LSM7 and LSM4. Component of the heptameric LSM2-LSM8 complex that forms a seven-membered ring structure with a donut shape. The LSM subunits are arranged in the order LSM8, LSM2, LSM3, LSM6, LSM5, LSM7 and LSM4. LSM2 subunit interacts only with its two neighboring subunits, LSM6A or LSM6B and LSM7. Expressed in roots, leaves, stems, flowers and siliques.

Its subcellular location is the cytoplasm. It localises to the nucleus. Its function is as follows. Component of LSM protein complexes, which are involved in RNA processing. Component of the cytoplasmic LSM1-LSM7 complex which is involved in mRNA degradation by promoting decapping and leading to accurate 5'-3' mRNA decay. The cytoplasmic LSM1-LSM7 complex regulates developmental gene expression by the decapping of specific development-related transcripts. Component of the nuclear LSM2-LSM8 complex which is involved splicing nuclear mRNAs. LSM2-LSM8 binds directly to the U6 small nuclear RNAs (snRNAs) and is essential for accurate splicing of selected development-related mRNAs through the stabilization of the spliceosomal U6 snRNA. Plays a critical role in the regulation of development-related gene expression. Involved in the control of plant sensitivity to abscisic acid (ABA) and drought. Functions with ABH1 as negative regulator of ABA signaling in guard cells. Required for regulation of splicing efficiency of many stress-responsive genes under stress conditions. The sequence is that of Sm-like protein LSM5 from Arabidopsis thaliana (Mouse-ear cress).